The sequence spans 687 residues: Probable WRKY transcription factor 2 (687 aa).

The segment at 197-276 (YGNYNNRSSS…AGGAPAEDGY (80 aa)) is disordered. Composition is skewed to polar residues over residues 199–208 (NYNNRSSSHQ) and 219–249 (NIESSNLYGIETDNQNGQNKTSDVTTNTSLE). The segment at residues 267 to 331 (AGGAPAEDGY…YKGAHNHLKP (65 aa)) is a DNA-binding region (WRKY 1). Zn(2+) contacts are provided by Cys298, Cys303, His326, and His328. Disordered stretches follow at residues 324–384 (GAHN…STRF) and 416–453 (FSNDEDEDDRGTHGSVSLGYDGGGGGGGGEGDESESKR). Positions 354–379 (RDSAATWVSCNNTQQQGGSNENNVEE) are enriched in polar residues. Residues 435 to 444 (YDGGGGGGGG) are compositionally biased toward gly residues. The WRKY 2 DNA-binding region spans 481–546 (SDVDILDDGY…YEGKHNHDVP (66 aa)). Positions 512, 517, 541, and 543 each coordinate Zn(2+). The interval 537–599 (YEGKHNHDVP…QVTTNNQSPF (63 aa)) is disordered. The segment covering 553-565 (HGGGGDSGNGNSG) has biased composition (gly residues). Positions 578-589 (HHSEPPRGRFDR) are enriched in basic and acidic residues. A compositionally biased stretch (polar residues) spans 590-599 (QVTTNNQSPF).

It belongs to the WRKY group I family. In terms of tissue distribution, low expression in senescent leaves. Expressed in both the unfertilized egg cell and the pollen tube.

It localises to the nucleus. Transcription factor. Regulates WOX8 and WOX9 expression and basal cell division patterns during early embryogenesis. Interacts specifically with the W box (5'-(T)TGAC[CT]-3'), a frequently occurring elicitor-responsive cis-acting element. Required to repolarize the zygote from a transient symmetric state. This Arabidopsis thaliana (Mouse-ear cress) protein is Probable WRKY transcription factor 2.